The chain runs to 79 residues: Polcalcin Bra r 1 (79 aa).

EF-hand domains are found at residues 1 to 36 and 39 to 71; these read MADAEHERIFKKFDTDGDGKISAAELEEALKKLGSV and DDVTRMMAKIDTDGDGNISFQEFTEFASANPGL. 10 residues coordinate Ca(2+): Asp-14, Asp-16, Asp-18, Lys-20, Glu-25, Asp-49, Asp-51, Asp-53, Asn-55, and Glu-60.

The protein is Polcalcin Bra r 1 of Brassica campestris (Field mustard).